The sequence spans 338 residues: Phosphate transport system permease protein PstC 1 (338 aa).

8 consecutive transmembrane segments (helical) span residues 19-39 (GGIG…VLVI), 93-113 (TSAI…LVIV), 123-143 (AVGI…GLWG), 144-164 (AMTF…HNAP), 181-201 (GMLV…ATTT), 232-252 (LPWV…RALG), 254-274 (TMAV…NIYA), and 295-315 (TNFA…ITLL). The ABC transmembrane type-1 domain maps to 87 to 320 (IVGTLATSAI…VITLLTNVAA (234 aa)).

Belongs to the binding-protein-dependent transport system permease family. CysTW subfamily.

The protein resides in the cell membrane. Functionally, part of the binding-protein-dependent transport system for phosphate; probably responsible for the translocation of the substrate across the membrane. This Mycobacterium bovis (strain ATCC BAA-935 / AF2122/97) protein is Phosphate transport system permease protein PstC 1 (pstC1).